The primary structure comprises 328 residues: L-asparaginase (328 aa).

Residues 1–320 form the Asparaginase/glutaminase domain; sequence MKLLVLGTGG…EEIRKIMERN (320 aa). Thr11 acts as the Nucleophile; O-isoaspartyl threonine intermediate in catalysis. Residues Thr11, Asp53, Ser54, Thr85, and Asp86 each coordinate L-aspartate. Active-site charge relay system residues include Thr85, Asp86, Lys156, and Tyr274.

This sequence belongs to the asparaginase 1 family. Homodimer.

It catalyses the reaction L-asparagine + H2O = L-aspartate + NH4(+). Chohan et al. found that divalent metal ions and EDTA do not have any significant effect on enzyme activity, indicating that activity is independent of metal ions. In another study, Hong et al. showed that activity is enhanced by Mg(2+), significantly inhibited by Co(2+) and Ni(2+), and moderately inhibited by Ca(2+), Cu(2+) and EDTA. Unfolding studies suggest that urea cannot induce complete unfolding and inactivation of the enzyme even at a concentration 8 M. However, in the presence of 4 M guanidine hydrochloride, the enzyme structure is unfolded with complete loss of enzyme activity. Functionally, catalyzes the hydrolysis of L-asparagine into L-aspartate and ammonia. Also displays D-asparaginase activity, which is about 50% of the L-asparaginase activity. Does not exhibit glutaminase activity. This is L-asparaginase from Thermococcus kodakarensis (strain ATCC BAA-918 / JCM 12380 / KOD1) (Pyrococcus kodakaraensis (strain KOD1)).